A 389-amino-acid polypeptide reads, in one-letter code: Cellobiose 2-epimerase (389 aa).

It belongs to the cellobiose 2-epimerase family.

The protein localises to the cytoplasm. The catalysed reaction is D-cellobiose = beta-D-glucosyl-(1-&gt;4)-D-mannopyranose. With respect to regulation, enhanced by Mg(2+) and Ca(2+) ions, ethylenediaminetetraacetic acid, ethylene glycol tetraacetic acid and citrate. Inhibited by Al(3+), Fe(3+), Co(2+), Cu(2+), Zn(2+), Pb(2+) and Ag(+) ions, iodoacetate, 4-chloromercuribenzoate and N-bromosuccinimide. Its function is as follows. Catalyzes the reversible epimerization of cellobiose to 4-O-beta-D-glucopyranosyl-D-mannose (Glc-Man). Can also epimerize cellotriose to Glc-Glc-Man, cellotetraose to Glc-Glc-Glc-Man, and lactose to epilactose. The chain is Cellobiose 2-epimerase (ce-ne1) from Ruminococcus albus.